A 777-amino-acid polypeptide reads, in one-letter code: Penicillin-binding protein 1B (777 aa).

Residues 1-30 (MTRKSSNRSRGRKARSGKSASSSKLQIWLG) are Cytoplasmic-facing. The chain crosses the membrane as a helical; Signal-anchor for type II membrane protein span at residues 31-52 (RIWSIGWKLALTLAAVLVFIGI). The Periplasmic segment spans residues 53 to 777 (YLDSMIKQRF…TEWIKKLFEW (725 aa)). Residues 162 to 334 (LRLEPKLMGM…SYYNPMRYAE (173 aa)) form a transglycosylase region. Catalysis depends on glutamate 200, which acts as the Proton donor; for transglycosylase activity. The interval 415–709 (SKLEQAIHDQ…ASGALRVYAQ (295 aa)) is transpeptidase. Serine 476 functions as the Acyl-ester intermediate; for transpeptidase activity in the catalytic mechanism.

In the N-terminal section; belongs to the glycosyltransferase 51 family. This sequence in the C-terminal section; belongs to the transpeptidase family.

Its subcellular location is the cell inner membrane. The catalysed reaction is [GlcNAc-(1-&gt;4)-Mur2Ac(oyl-L-Ala-gamma-D-Glu-L-Lys-D-Ala-D-Ala)](n)-di-trans,octa-cis-undecaprenyl diphosphate + beta-D-GlcNAc-(1-&gt;4)-Mur2Ac(oyl-L-Ala-gamma-D-Glu-L-Lys-D-Ala-D-Ala)-di-trans,octa-cis-undecaprenyl diphosphate = [GlcNAc-(1-&gt;4)-Mur2Ac(oyl-L-Ala-gamma-D-Glu-L-Lys-D-Ala-D-Ala)](n+1)-di-trans,octa-cis-undecaprenyl diphosphate + di-trans,octa-cis-undecaprenyl diphosphate + H(+). It catalyses the reaction Preferential cleavage: (Ac)2-L-Lys-D-Ala-|-D-Ala. Also transpeptidation of peptidyl-alanyl moieties that are N-acyl substituents of D-alanine.. It functions in the pathway cell wall biogenesis; peptidoglycan biosynthesis. In terms of biological role, cell wall formation. Synthesis of cross-linked peptidoglycan from the lipid intermediates. The enzyme has a penicillin-insensitive transglycosylase N-terminal domain (formation of linear glycan strands) and a penicillin-sensitive transpeptidase C-terminal domain (cross-linking of the peptide subunits). The protein is Penicillin-binding protein 1B (mrcB) of Vibrio cholerae serotype O1 (strain ATCC 39315 / El Tor Inaba N16961).